The primary structure comprises 539 residues: AT-rich interactive domain-containing protein 3A (539 aa).

The interval 1-190 (MKLQAVMETL…PLSGHPQLQD (190 aa)) is disordered. The span at 55–73 (LKIQRAQAAALAAMRAAAA) shows a compositional bias: low complexity. The span at 84 to 100 (SEEEDGESMASDEEDEK) shows a compositional bias: acidic residues. The segment covering 101-110 (ERDGESERYQ) has biased composition (basic and acidic residues). Acidic residues predominate over residues 113-141 (ASEEEDLKGKWDEDDFEDEGEDEYEDMEE). Positions 161 to 173 (HSSQQAFPSQRSQ) are enriched in polar residues. The 93-residue stretch at 209 to 301 (DPKRKEFLDD…YLYPYECEKR (93 aa)) folds into the ARID domain. The REKLES domain maps to 404-499 (AALEQLREKL…GVLFAQPPTS (96 aa)). The interval 405 to 448 (ALEQLREKLESGEPPEKKMALGSEEQQRIIQRTIQHNLLAMTAQ) is important for nuclear localization. The homodimerization stretch occupies residues 450–471 (PMNIRINSQAEGRQDSAVNLTT). The interval 495–502 (QPPTSASG) is important for cytoplasmic localization. Residues 497–512 (PTSASGTSKGSSNRTG) are compositionally biased toward polar residues. The disordered stretch occupies residues 497–539 (PTSASGTSKGSSNRTGSIGGGSSNSQAAPPSTPSAPNSNNPSP). Positions 519–539 (SNSQAAPPSTPSAPNSNNPSP) are enriched in low complexity.

In terms of assembly, homodimer.

It is found in the nucleus. The protein resides in the cytoplasm. Functionally, transcription factor required for smad1 and smad2-mediated responses to TGFbeta during mesoderm induction. This is AT-rich interactive domain-containing protein 3A (arid3a) from Xenopus laevis (African clawed frog).